Here is a 76-residue protein sequence, read N- to C-terminus: Proteolipid protein 2 (76 aa).

In terms of domain architecture, MARVEL spans 1-60 (ISGPWSDFFRALGAVILYLMTSIVVLVERGNNSKGAAGVLGLCAAGLFGYDAYITFPSGT). The chain crosses the membrane as a helical span at residues 8–28 (FFRALGAVILYLMTSIVVLVE). N31 carries N-linked (GlcNAc...) asparagine glycosylation. A helical membrane pass occupies residues 36-56 (AAGVLGLCAAGLFGYDAYITF).

The protein resides in the membrane. Functionally, may play a role in cell differentiation in the intestinal epithelium. The chain is Proteolipid protein 2 (PLP2) from Ovis aries (Sheep).